Reading from the N-terminus, the 379-residue chain is Mannitol-1-phosphate 5-dehydrogenase (379 aa).

3-14 (ALHFGAGNIGRG) is a binding site for NAD(+).

This sequence belongs to the mannitol dehydrogenase family.

The catalysed reaction is D-mannitol 1-phosphate + NAD(+) = beta-D-fructose 6-phosphate + NADH + H(+). The protein is Mannitol-1-phosphate 5-dehydrogenase of Actinobacillus pleuropneumoniae serotype 5b (strain L20).